The sequence spans 307 residues: Serine/threonine-protein phosphatase 4 catalytic subunit (307 aa).

Mn(2+) contacts are provided by aspartate 54, histidine 56, aspartate 82, and asparagine 114. Histidine 115 (proton donor) is an active-site residue. Mn(2+)-binding residues include histidine 164 and histidine 238. Leucine methyl ester is present on leucine 307.

Belongs to the PPP phosphatase family. PP-4 (PP-X) subfamily. In terms of assembly, serine/threonine-protein phosphatase 4 (PP4) occurs in different assemblies of the catalytic and one or more regulatory subunits. Probably part of a PP4 PPP4C-PPP4R2-PPP4R3 complex containing Pp4-19C, PPP4R2r and flfl. Interacts with Ptpa; thereby mediating basal localization of the Miranda (Mira) complex; probably by dephosphorylation of Mira. Requires Mn(2+) as cofactor. Post-translationally, reversibly methyl esterified on Leu-307 by leucine carboxyl methyltransferase 1 (LCMT1) and protein phosphatase methylesterase 1 (PPME1). Carboxyl methylation influences the affinity of the catalytic subunit for the different regulatory subunits, thereby modulating the PP2A holoenzyme's substrate specificity, enzyme activity and cellular localization.

The protein localises to the cytoplasm. It localises to the nucleus. It is found in the cytoskeleton. The protein resides in the microtubule organizing center. Its subcellular location is the centrosome. It carries out the reaction O-phospho-L-seryl-[protein] + H2O = L-seryl-[protein] + phosphate. The catalysed reaction is O-phospho-L-threonyl-[protein] + H2O = L-threonyl-[protein] + phosphate. Its function is as follows. Protein phosphatase that regulates many processes such as microtubule organization at centrosomes. The probable PP4 complex Pp4-19C-PPP4R2r-flfl (PPP4C-PPP4R2-PPP4R3) is required to prevent caspase-induced cell death (in vitro). The protein is Serine/threonine-protein phosphatase 4 catalytic subunit (Pp4-19C) of Drosophila melanogaster (Fruit fly).